Consider the following 251-residue polypeptide: Dehydration-responsive element-binding protein 1I (251 aa).

Positions 1–50 (MCTSKLEEITGEWPPPALQAASTTSSSEPCRRLSPPSSKRPAGRTKFHET) are disordered. A DNA-binding region (AP2/ERF) is located at residues 54-114 (VFRGVRRRGR…GRAAACLNFA (61 aa)). The tract at residues 169-198 (ATSEPSAASDDDAVTSSSSTTDADEEASPF) is disordered.

The protein belongs to the AP2/ERF transcription factor family. ERF subfamily.

The protein localises to the nucleus. Functionally, transcriptional activator that binds specifically to the DNA sequence 5'-[AG]CCGAC-3'. Binding to the C-repeat/DRE element mediates high salinity- and dehydration-inducible transcription. This chain is Dehydration-responsive element-binding protein 1I (DREB1I), found in Oryza sativa subsp. japonica (Rice).